A 181-amino-acid chain; its full sequence is NAD(P)H-quinone oxidoreductase subunit I, chloroplastic (181 aa).

4Fe-4S ferredoxin-type domains follow at residues 55-84 (GRIHFEFDKCIACEVCVRVCPINLPVVDWE) and 95-124 (KSYSIDFGVCIFCGNCVEYCPTNCLSMTEE). [4Fe-4S] cluster-binding residues include C64, C67, C70, C74, C104, C107, C110, and C114.

This sequence belongs to the complex I 23 kDa subunit family. In terms of assembly, NDH is composed of at least 16 different subunits, 5 of which are encoded in the nucleus. The cofactor is [4Fe-4S] cluster.

It is found in the plastid. The protein resides in the chloroplast thylakoid membrane. The catalysed reaction is a plastoquinone + NADH + (n+1) H(+)(in) = a plastoquinol + NAD(+) + n H(+)(out). The enzyme catalyses a plastoquinone + NADPH + (n+1) H(+)(in) = a plastoquinol + NADP(+) + n H(+)(out). Its function is as follows. NDH shuttles electrons from NAD(P)H:plastoquinone, via FMN and iron-sulfur (Fe-S) centers, to quinones in the photosynthetic chain and possibly in a chloroplast respiratory chain. The immediate electron acceptor for the enzyme in this species is believed to be plastoquinone. Couples the redox reaction to proton translocation, and thus conserves the redox energy in a proton gradient. In Physcomitrium patens (Spreading-leaved earth moss), this protein is NAD(P)H-quinone oxidoreductase subunit I, chloroplastic.